Consider the following 124-residue polypeptide: MPPKDSKQKKDAGKSKKDKDPVNKSGGKAKKKKWSKGKVRDKLNNLVLFDKATYDKLYKEVPNYKLITPAVVSERLKIRGSLARAALQELLGKGLIKLVSKHRAQVIYTRNTKGTDEAAPEKEA.

The segment covering 1-22 has biased composition (basic and acidic residues); that stretch reads MPPKDSKQKKDAGKSKKDKDPV. The disordered stretch occupies residues 1 to 37; that stretch reads MPPKDSKQKKDAGKSKKDKDPVNKSGGKAKKKKWSKG. Basic residues predominate over residues 27 to 37; the sequence is GKAKKKKWSKG.

It belongs to the eukaryotic ribosomal protein eS25 family. Component of the small ribosomal subunit.

The protein localises to the cytoplasm. Its function is as follows. Component of the small ribosomal subunit. The ribosome is a large ribonucleoprotein complex responsible for the synthesis of proteins in the cell. In Danio rerio (Zebrafish), this protein is Small ribosomal subunit protein eS25 (rps25).